Consider the following 99-residue polypeptide: Putative septation protein SpoVG (99 aa).

This sequence belongs to the SpoVG family.

Its function is as follows. Could be involved in septation. The polypeptide is Putative septation protein SpoVG (Aster yellows witches'-broom phytoplasma (strain AYWB)).